The chain runs to 306 residues: Protein SULFUR DEFICIENCY-INDUCED 1 (306 aa).

5 TPR repeats span residues 1–22 (MERS…NLMK), 71–104 (DSAL…CSKN), 107–140 (DSLD…IYQG), 167–200 (SRLL…EPDA), and 202–233 (KSCN…RVLG). Residues 72-139 (SALKDMAVVM…LKRKLRQIYQ (68 aa)) are a coiled coil. Positions 238 to 260 (RTRQRAEELLSELESSLPRMRDA) form a coiled coil. Residues 270–304 (LDDDFVLGLEEMTSTSFKSKRLPIFEQISSFRNTL) form a TPR 6 repeat.

The protein belongs to the MS5 protein family.

The protein resides in the nucleus. In terms of biological role, involved in the utilization of stored sulfate under sulfur-deficient conditions. In Arabidopsis thaliana (Mouse-ear cress), this protein is Protein SULFUR DEFICIENCY-INDUCED 1.